Here is a 397-residue protein sequence, read N- to C-terminus: Na(+)/H(+) antiporter NhaA 1 (397 aa).

Helical transmembrane passes span 15–35, 42–62, 65–85, 101–121, 129–149, 160–180, 183–203, 219–241, 265–285, 299–319, 335–355, and 370–390; these read FQLEAASGLLLIAAAVLALII, YLYGGLLEVPVAVQVGALNIA, LLLWINDGLMALFFLLIGLEV, ILPATAAVGGMVVPALIYWFI, VAGWAIPTATDIAFALGVLAL, LFLMTLAIIDDLGAIIVIALF, GTLSSVSLLLAAACLLVLVAM, LILWVCVLKSGVHATLAGVALAF, WVAYAILPIFAFANAGVSLAG, ITIGLLLGKTVGVFGLTWVAV, ILGVAILCGIGFTMSLFVGSL, and MGILTGSFFAAVIGYAVTAMA.

The protein belongs to the NhaA Na(+)/H(+) (TC 2.A.33) antiporter family.

It is found in the cell inner membrane. It carries out the reaction Na(+)(in) + 2 H(+)(out) = Na(+)(out) + 2 H(+)(in). Functionally, na(+)/H(+) antiporter that extrudes sodium in exchange for external protons. This chain is Na(+)/H(+) antiporter NhaA 1, found in Pseudomonas putida (strain ATCC 47054 / DSM 6125 / CFBP 8728 / NCIMB 11950 / KT2440).